A 180-amino-acid chain; its full sequence is MPQRLQILYNTVIVPKLQKELGYTNIHQVPRLEKIVINRGLGEASQNAKALESSIAEISAITGQRPVITRAKKAIASFKIRKGMPVGLMVTLRRERMYAFLDRLINVALPRIRDFRGVSPKAFDGRGNYTLGIREQLIFPEINYDSVDQLRGMDISIVTTAKTDEEGRALLKAFGMPFAS.

Belongs to the universal ribosomal protein uL5 family. In terms of assembly, part of the 50S ribosomal subunit; part of the 5S rRNA/L5/L18/L25 subcomplex. Contacts the 5S rRNA and the P site tRNA. Forms a bridge to the 30S subunit in the 70S ribosome.

Functionally, this is one of the proteins that bind and probably mediate the attachment of the 5S RNA into the large ribosomal subunit, where it forms part of the central protuberance. In the 70S ribosome it contacts protein S13 of the 30S subunit (bridge B1b), connecting the 2 subunits; this bridge is implicated in subunit movement. Contacts the P site tRNA; the 5S rRNA and some of its associated proteins might help stabilize positioning of ribosome-bound tRNAs. The polypeptide is Large ribosomal subunit protein uL5 (Synechococcus sp. (strain JA-2-3B'a(2-13)) (Cyanobacteria bacterium Yellowstone B-Prime)).